Here is a 410-residue protein sequence, read N- to C-terminus: WD repeat and FYVE domain-containing protein 1 (410 aa).

WD repeat units lie at residues 22 to 61, 66 to 105, 112 to 150, 153 to 192, 197 to 236, and 240 to 279; these read GHQD…QYWP, TMAS…NKMN, AHQN…NMLG, FFTS…CSVI, GHEG…GRTL, and GHHD…EEAP. The FYVE-type zinc finger occupies 281–352; it reads WLESDSCQKC…VCDSCYDSIK (72 aa). Positions 287, 290, 314, 317, 322, 325, 344, and 347 each coordinate Zn(2+). Residues 364–403 form a WD 7 repeat; that stretch reads EGKHNISHMSMDIARGLMVTCGTDRIVKIWDMTPVVGCSL. S408 carries the phosphoserine modification.

In terms of assembly, binds PtdIns3P in vitro with high specificity over other phosphoinositides. Interacts (via WD repeat 2) with tyrosine-phosphorylated TLR3 (via TIR domain) in response to poly(I:C). Interacts with TICAM1 in response to poly(I:C). Interacts with TLR4 in response to LPS.

The protein localises to the early endosome. Functionally, positively regulates TLR3- and TLR4-mediated signaling pathways by bridging the interaction between TLR3 or TLR4 and TICAM1. Promotes TLR3/4 ligand-induced activation of transcription factors IRF3 and NF-kappa-B, as well as the production of IFN-beta and inflammatory cytokines. The sequence is that of WD repeat and FYVE domain-containing protein 1 (WDFY1) from Homo sapiens (Human).